The sequence spans 619 residues: 2-succinyl-5-enolpyruvyl-6-hydroxy-3-cyclohexene-1-carboxylate synthase (619 aa).

Residues 385 to 398 (SSAHQSLAATNSDS) show a composition bias toward polar residues. The interval 385–415 (SSAHQSLAATNSDSSTDDIIENTDEEGSNES) is disordered. Residues 399 to 413 (STDDIIENTDEEGSN) are compositionally biased toward acidic residues.

Belongs to the TPP enzyme family. MenD subfamily. As to quaternary structure, homodimer. Requires Mg(2+) as cofactor. The cofactor is Mn(2+). Thiamine diphosphate is required as a cofactor.

The catalysed reaction is isochorismate + 2-oxoglutarate + H(+) = 5-enolpyruvoyl-6-hydroxy-2-succinyl-cyclohex-3-ene-1-carboxylate + CO2. It participates in quinol/quinone metabolism; 1,4-dihydroxy-2-naphthoate biosynthesis; 1,4-dihydroxy-2-naphthoate from chorismate: step 2/7. It functions in the pathway quinol/quinone metabolism; menaquinone biosynthesis. Catalyzes the thiamine diphosphate-dependent decarboxylation of 2-oxoglutarate and the subsequent addition of the resulting succinic semialdehyde-thiamine pyrophosphate anion to isochorismate to yield 2-succinyl-5-enolpyruvyl-6-hydroxy-3-cyclohexene-1-carboxylate (SEPHCHC). The polypeptide is 2-succinyl-5-enolpyruvyl-6-hydroxy-3-cyclohexene-1-carboxylate synthase (Haloquadratum walsbyi (strain DSM 16790 / HBSQ001)).